The chain runs to 674 residues: Transcription activator of gluconeogenesis PMAA_028970 (674 aa).

Positions 1-46 (MMDTDKDDLPSATDHSEHESGDAVKVEGGASKTASNSKDPSRPRRK) are disordered. The span at 14-25 (DHSEHESGDAVK) shows a compositional bias: basic and acidic residues. A DNA-binding region (zn(2)-C6 fungal-type) is located at residues 52–80 (CFACQRAHLTCGDERPCQRCIKRGLQDAC). Disordered regions lie at residues 117 to 181 (ISPT…ATPA), 250 to 321 (TGAG…SGLY), 344 to 374 (IGSNTFASPSSTTSPHATTIAPSQFDDSPMK), and 519 to 557 (NLNVNTGGGNNTSSQSDSTSSSIRGGAGGRMRNQEPGPN). Polar residues predominate over residues 120–148 (TEYTQNGTNNAQQQQQKSGTIYASSTPSY). Over residues 149–163 (NNNNGTFDTNNATNT) the composition is skewed to low complexity. Composition is skewed to polar residues over residues 269–278 (GQRSNSQQFG) and 285–294 (TTESPSQQSF). Low complexity-rich tracts occupy residues 348-366 (TFASPSSTTSPHATTIAPS) and 529-540 (NTSSQSDSTSSS).

This sequence belongs to the ERT1/acuK family.

Its subcellular location is the nucleus. In terms of biological role, transcription factor which regulates nonfermentable carbon utilization. Activator of gluconeogenetic genes. The polypeptide is Transcription activator of gluconeogenesis PMAA_028970 (Talaromyces marneffei (strain ATCC 18224 / CBS 334.59 / QM 7333) (Penicillium marneffei)).